A 196-amino-acid polypeptide reads, in one-letter code: Glycerol-3-phosphate acyltransferase (196 aa).

6 helical membrane-spanning segments follow: residues 5-25 (VYLLIVFAYLLGSVSSAIIFC), 53-73 (FSALGVLLFDILKGGLPVLLA), 80-100 (PSEIGLIALAACLGHIFPLFF), 107-127 (GVATAFGALLSISFAASAAGL), 130-150 (WLIVFLLFGYSSLSAVITALI), and 153-173 (FYIWWFLPEFTFPVALVCCLL).

Belongs to the PlsY family. In terms of assembly, probably interacts with PlsX.

It is found in the cell inner membrane. It carries out the reaction an acyl phosphate + sn-glycerol 3-phosphate = a 1-acyl-sn-glycero-3-phosphate + phosphate. It participates in lipid metabolism; phospholipid metabolism. Catalyzes the transfer of an acyl group from acyl-phosphate (acyl-PO(4)) to glycerol-3-phosphate (G3P) to form lysophosphatidic acid (LPA). This enzyme utilizes acyl-phosphate as fatty acyl donor, but not acyl-CoA or acyl-ACP. The chain is Glycerol-3-phosphate acyltransferase from Actinobacillus pleuropneumoniae serotype 7 (strain AP76).